The sequence spans 94 residues: uncharacterized protein (94 aa).

A signal peptide spans 1–26; sequence MNDQRDQAVPWATGLAVAGFVAAVIA. 2 consecutive transmembrane segments (helical) span residues 42 to 62 and 71 to 91; these read LLAV…LWGW and FVLG…ALTL.

The protein localises to the cell membrane. This is an uncharacterized protein from Mycobacterium tuberculosis (strain CDC 1551 / Oshkosh).